We begin with the raw amino-acid sequence, 418 residues long: Trans-acting enoyl reductase (418 aa).

It belongs to the saccharopine dehydrogenase family. Enoyl reductase subfamily.

In terms of biological role, involved in the reduction of the double bond between C-4 and C-5 during phthiocerol dimycocerosates (DIM A) and glycosylated phenolphthiocerol dimycocerosates (PGL) biosynthesis. This is Trans-acting enoyl reductase from Mycobacterium ulcerans (strain Agy99).